A 95-amino-acid polypeptide reads, in one-letter code: Aspartyl/glutamyl-tRNA(Asn/Gln) amidotransferase subunit C (95 aa).

Belongs to the GatC family. Heterotrimer of A, B and C subunits.

The enzyme catalyses L-glutamyl-tRNA(Gln) + L-glutamine + ATP + H2O = L-glutaminyl-tRNA(Gln) + L-glutamate + ADP + phosphate + H(+). It carries out the reaction L-aspartyl-tRNA(Asn) + L-glutamine + ATP + H2O = L-asparaginyl-tRNA(Asn) + L-glutamate + ADP + phosphate + 2 H(+). Allows the formation of correctly charged Asn-tRNA(Asn) or Gln-tRNA(Gln) through the transamidation of misacylated Asp-tRNA(Asn) or Glu-tRNA(Gln) in organisms which lack either or both of asparaginyl-tRNA or glutaminyl-tRNA synthetases. The reaction takes place in the presence of glutamine and ATP through an activated phospho-Asp-tRNA(Asn) or phospho-Glu-tRNA(Gln). This is Aspartyl/glutamyl-tRNA(Asn/Gln) amidotransferase subunit C from Campylobacter lari (strain RM2100 / D67 / ATCC BAA-1060).